The chain runs to 374 residues: Alcohol dehydrogenase 1 (374 aa).

Residue Ser-1 is modified to N-acetylserine. Zn(2+) is bound by residues Cys-46, His-67, Cys-97, Cys-100, Cys-103, Cys-111, and Cys-174. NAD(+)-binding positions include 199 to 204 (GLGGVG), Asp-223, Lys-228, 292 to 294 (VGV), and Arg-369.

The protein belongs to the zinc-containing alcohol dehydrogenase family. Class-I subfamily. Homodimer. It depends on Zn(2+) as a cofactor.

The protein resides in the cytoplasm. It catalyses the reaction a primary alcohol + NAD(+) = an aldehyde + NADH + H(+). It carries out the reaction a secondary alcohol + NAD(+) = a ketone + NADH + H(+). The sequence is that of Alcohol dehydrogenase 1 (ADH1) from Struthio camelus (Common ostrich).